We begin with the raw amino-acid sequence, 647 residues long: RalA-binding protein 1 (647 aa).

Disordered regions lie at residues 1–151 (MTEC…EKKC) and 163–186 (WKEKKKKKKPTQEPEVPQTDAPSL). The residue at position 2 (T2) is an N-acetylthreonine. Polar residues predominate over residues 24–33 (LTRTPSSEEI). Phosphoserine is present on residues S29, S30, and S34. T44 carries the phosphothreonine modification. Residues S48 and S62 each carry the phosphoserine modification. Residues 52–68 (DILHEPPDIVSDDEKDH) show a composition bias toward basic and acidic residues. An ATP-binding site is contributed by 69–74 (GKKKGK). Residues 69–79 (GKKKGKFKKKE) show a composition bias toward basic residues. S92 and S93 each carry phosphoserine. The span at 102–118 (KMKRSKGIHVFKKPSFS) shows a compositional bias: basic residues. The nuclear localization signal stretch occupies residues 102 to 119 (KMKRSKGIHVFKKPSFSK). Positions 119–151 (KKKEKDFKIKEKPKEEKHKEEKHKEEKHKEKKC) are enriched in basic and acidic residues. Positions 154–219 (FTAADVVKQW…PAVFRECVDY (66 aa)) are mediates association with membranes and could form transmembrane domains. One can recognise a Rho-GAP domain in the interval 192 to 380 (APFADAVERT…VLLKQVTRPL (189 aa)). The interval 403 to 499 (RRQEFLLNCL…LTEQEELLAM (97 aa)) is mediates interaction with RALA and RALB. 418–425 (GGIKDFSK) is a binding site for ATP. Phosphoserine is present on residues S461 and S463. Residues 500–647 (EQFLRRQIAS…PSKDRKETPI (148 aa)) are mediates interaction with REPS1 and REPS2. Disordered stretches follow at residues 525-550 (QSRQHGRSETEEYSSDSESESEDEEE) and 601-647 (EQQL…ETPI). Over residues 535–550 (EEYSSDSESESEDEEE) the composition is skewed to acidic residues. A compositionally biased stretch (basic and acidic residues) spans 628 to 647 (RAAKEQAKPSPSKDRKETPI). S637 bears the Phosphoserine mark.

As to quaternary structure, interacts with the GTP-bound form of RALA (via effector domain); during mitosis, recruits RALBP1 to the mitochondrion where it promotes DNM1L phosphorylation and mitochondrial fission. Interacts with DNM1L; mediates its mitotic kinase cyclin B-CDK1-mediated phosphorylation during mitosis to promote mitochondrial fission. Interacts with the mitotic kinase cyclin B-CDK1 during mitosis. Interacts with the GTP-bound form of RALB (via effector domain). Interacts with REPS1; the interaction is direct and does not affect RALA-binding nor GTPase activator activity of RALBP1. Interacts with REPS2; the interaction is direct and does not affect RALA-binding nor GTPase activator activity of RALBP1. Interacts with EPN1, NUMB and TFAP2A during interphase and mitosis. Interacts with AP2M1; as part of the AP2 complex. Interacts with CDC42. Interacts with RAC1. Tyrosine-phosphorylated upon stimulation of cells with EGF. In terms of processing, may undergo proteolytic cleavage to give peptides which reassemble to form a transporter complex. Ubiquitously expressed.

It localises to the cell membrane. Its subcellular location is the cytoplasm. The protein localises to the cytosol. The protein resides in the cytoskeleton. It is found in the spindle pole. It localises to the nucleus. Its subcellular location is the mitochondrion. The enzyme catalyses an S-substituted glutathione(in) + ATP + H2O = an S-substituted glutathione(out) + ADP + phosphate + H(+). It carries out the reaction ATP + H2O + xenobioticSide 1 = ADP + phosphate + xenobioticSide 2.. The catalysed reaction is leukotriene C4(in) + ATP + H2O = leukotriene C4(out) + ADP + phosphate + H(+). In terms of biological role, multifunctional protein that functions as a downstream effector of RALA and RALB. As a GTPase-activating protein/GAP can inactivate CDC42 and RAC1 by stimulating their GTPase activity. As part of the Ral signaling pathway, may also regulate ligand-dependent EGF and insulin receptors-mediated endocytosis. During mitosis, may act as a scaffold protein in the phosphorylation of EPSIN/EPN1 by the mitotic kinase cyclin B-CDK1, preventing endocytosis during that phase of the cell cycle. During mitosis, also controls mitochondrial fission as an effector of RALA. Recruited to mitochondrion by RALA, acts as a scaffold to foster the mitotic kinase cyclin B-CDK1-mediated phosphorylation and activation of DNM1L. Could also function as a primary ATP-dependent active transporter for glutathione conjugates of electrophiles. May also actively catalyze the efflux of a wide range of substrates including xenobiotics like doxorubicin (DOX) contributing to cell multidrug resistance. The polypeptide is RalA-binding protein 1 (Rattus norvegicus (Rat)).